A 516-amino-acid chain; its full sequence is Keratin, type II cuticular Hb2 (516 aa).

Residues 1–118 form a head region; that stretch reads MSCRNFQLSP…PTVQRVKRDE (118 aa). The IF rod domain maps to 118–429; it reads EKEQIKCLNN…RLLEGEEHRL (312 aa). The segment at 119–153 is coil 1A; it reads KEQIKCLNNRFASFINKVRFLEQKNKLLETKWNFM. The linker 1 stretch occupies residues 154-163; that stretch reads QQQRSCQSNM. Residues 164–264 are coil 1B; sequence EPLFEGYICA…FEEEIGLLQS (101 aa). Residues 265-281 form a linker 12 region; it reads QISETSVIVKMDNSREL. The interval 282–425 is coil 2; sequence DVDGIVAEIK…ATYRRLLEGE (144 aa). The tail stretch occupies residues 426–516; that stretch reads EHRLCEGIGP…VGVGSNSCSR (91 aa).

The protein belongs to the intermediate filament family. Heterotetramer of two type I and two type II keratins.

In Mus musculus (Mouse), this protein is Keratin, type II cuticular Hb2 (Krt82).